A 155-amino-acid polypeptide reads, in one-letter code: Large ribosomal subunit protein uL30 (155 aa).

It belongs to the universal ribosomal protein uL30 family. In terms of assembly, part of the 50S ribosomal subunit.

This Nitrosopumilus maritimus (strain SCM1) protein is Large ribosomal subunit protein uL30.